A 127-amino-acid chain; its full sequence is Protein ApaG (127 aa).

In terms of domain architecture, ApaG spans 3–127 (KDKRYAFSVK…FQLNMPRVLH (125 aa)).

This is Protein ApaG from Methylobacillus flagellatus (strain ATCC 51484 / DSM 6875 / VKM B-1610 / KT).